Consider the following 210-residue polypeptide: Ion-translocating oxidoreductase complex subunit G (210 aa).

A helical transmembrane segment spans residues 9–29 (SLVLALFAIAATALVTITYAL). The residue at position 176 (Thr-176) is an FMN phosphoryl threonine.

It belongs to the RnfG family. As to quaternary structure, the complex is composed of six subunits: RnfA, RnfB, RnfC, RnfD, RnfE and RnfG. The cofactor is FMN.

The protein localises to the cell inner membrane. In terms of biological role, part of a membrane-bound complex that couples electron transfer with translocation of ions across the membrane. The sequence is that of Ion-translocating oxidoreductase complex subunit G from Aliivibrio fischeri (strain ATCC 700601 / ES114) (Vibrio fischeri).